The sequence spans 42 residues: Photosystem I reaction center subunit IX (42 aa).

Residues 7-27 (YLSIAPVLATLWFGFLVGSLI) form a helical membrane-spanning segment.

The protein belongs to the PsaJ family.

The protein resides in the plastid membrane. In terms of biological role, may help in the organization of the PsaE and PsaF subunits. The chain is Photosystem I reaction center subunit IX from Aneura mirabilis (Parasitic liverwort).